A 1655-amino-acid chain; its full sequence is Outer membrane protein B (1655 aa).

The propeptide occupies glycine 1335–alanine 1362. An Autotransporter domain is found at valine 1367–phenylalanine 1655.

This sequence belongs to the rickettsiae OmpA/OmpB family.

Its subcellular location is the periplasm. It localises to the secreted. It is found in the cell surface. The protein resides in the cell outer membrane. The 120 kDa surface-exposed protein is a major structural protein which may play a role as a rickettsial virulence factor and/or immunogen during infection. Its function is as follows. The 32 kDa beta peptide may serve as a membrane anchor. It has been shown to adhere to biotinylated Vero cell proteins. This chain is Outer membrane protein B (ompB), found in Rickettsia conorii (strain ATCC VR-613 / Malish 7).